Reading from the N-terminus, the 154-residue chain is 17.4 kDa class I heat shock protein (154 aa).

Residues 40 to 154 (DAAAFAGARI…PDVKSIQITG (115 aa)) form the sHSP domain.

Belongs to the small heat shock protein (HSP20) family. As to quaternary structure, may form oligomeric structures.

The protein resides in the cytoplasm. In Oryza sativa subsp. japonica (Rice), this protein is 17.4 kDa class I heat shock protein (HSP17.4).